The chain runs to 415 residues: Protein-lysine N-trimethyltransferase SMYD5 (415 aa).

Residues 20–351 (NCVDVRFINN…PGEEICISYL (332 aa)) form the SET domain. The segment at 95–135 (PHPELCKVRPDRHQACPQCQVMYCSSECRQAAMDQYHKILC) adopts an MYND-type zinc-finger fold. Tyr-350 lines the S-adenosyl-L-methionine pocket. Positions 388-415 (DMTSEDEEEVEGEGETEGEDMEDEMTDV) are disordered.

It belongs to the class V-like SAM-binding methyltransferase superfamily. Expressed at high levels in the ovary and at lower levels in the fin, testis and brain.

The protein resides in the cytoplasm. The enzyme catalyses L-lysyl-[protein] + 3 S-adenosyl-L-methionine = N(6),N(6),N(6)-trimethyl-L-lysyl-[protein] + 3 S-adenosyl-L-homocysteine + 3 H(+). It carries out the reaction L-lysyl(20)-[histone H4] + 3 S-adenosyl-L-methionine = N(6),N(6),N(6)-trimethyl-L-lysyl(20)-[histone H4] + 3 S-adenosyl-L-homocysteine + 3 H(+). It catalyses the reaction L-lysyl(36)-[histone H3] + 3 S-adenosyl-L-methionine = N(6),N(6),N(6)-trimethyl-L-lysyl(36)-[histone H3] + 3 S-adenosyl-L-homocysteine + 3 H(+). Its function is as follows. Protein-lysine N-trimethyltransferase that specifically catalyzes trimethylation of 'Lys-22' of the RPL40/eL40 subunit of the 60S ribosome, thereby promoting translation elongation and protein synthesis. May also act as a histone methyltransferase in the context of histone octamers, but not on nucleosome substrates: trimethylates 'Lys-36' of histone H3 and 'Lys-20' of histone H4 to form H3K36me3 and H4K20me3, respectively. The histone methyltransferase activity, which is independent of its SET domain, is however unsure in vivo. Plays a crucial role in hematopoiesis during embryogenesis by negatively regulating expression of genes related to both primitive and definitive hematopoiesis. In Danio rerio (Zebrafish), this protein is Protein-lysine N-trimethyltransferase SMYD5.